We begin with the raw amino-acid sequence, 139 residues long: uncharacterized protein (139 aa).

The interval 1–26 (MQLVREKRGAHQHVPRKTTEPQKVRG) is disordered. The segment covering 17-26 (KTTEPQKVRG) has biased composition (basic and acidic residues).

This is an uncharacterized protein from Ictalurid herpesvirus 1 (strain Auburn) (IcHV-1).